The chain runs to 417 residues: Phosphoglycerate kinase 2 (417 aa).

Position 2 is an N-acetylserine (serine 2). A phosphoserine mark is found at serine 2 and serine 4. N6-acetyllysine is present on lysine 11. Residues valine 23, aspartate 24, phenylalanine 25, asparagine 26, glutamine 38, and arginine 39 each contribute to the (2R)-3-phosphoglycerate site. Position 48 is an N6-acetyllysine (lysine 48). (2R)-3-phosphoglycerate is bound by residues serine 62, histidine 63, glycine 65, and arginine 66. N6-acetyllysine is present on residues lysine 75, lysine 86, and lysine 97. Residues leucine 122 and arginine 123 each contribute to the (2R)-3-phosphoglycerate site. N6-acetyllysine is present on residues lysine 131 and lysine 146. The (2R)-3-phosphoglycerate site is built by histidine 170 and arginine 171. Tyrosine 196 carries the post-translational modification Phosphotyrosine. At lysine 199 the chain carries N6-acetyllysine. Glycine 214 is a binding site for ADP. Glycine 214 is a binding site for CDP. Residues alanine 215 and lysine 216 each contribute to the AMP site. Alanine 215 lines the ATP pocket. Alanine 215 serves as a coordination point for Mg(2+). Mg(2+)-binding residues include alanine 218 and aspartate 219. Aspartate 219 serves as a coordination point for CDP. An AMP-binding site is contributed by lysine 220. Lysine 220 is an ATP binding site. Glycine 238 is a binding site for ADP. Position 238 (glycine 238) interacts with CDP. Residue glycine 239 coordinates AMP. Glycine 239 contributes to the ATP binding site. 2 positions are modified to N6-acetyllysine: lysine 267 and lysine 291. Glycine 313 provides a ligand contact to AMP. Residue glycine 313 coordinates ATP. The CDP site is built by glycine 338 and phenylalanine 343. An ADP-binding site is contributed by phenylalanine 343. Position 344 (glutamate 344) interacts with AMP. Residues glutamate 344, aspartate 375, and threonine 376 each contribute to the ATP site. Aspartate 375 serves as a coordination point for Mg(2+).

It belongs to the phosphoglycerate kinase family. Monomer. It depends on Mg(2+) as a cofactor.

The protein resides in the cytoplasm. It carries out the reaction (2R)-3-phosphoglycerate + ATP = (2R)-3-phospho-glyceroyl phosphate + ADP. Its pathway is carbohydrate degradation; glycolysis; pyruvate from D-glyceraldehyde 3-phosphate: step 2/5. In terms of biological role, essential for sperm motility and male fertility but is not required for the completion of spermatogenesis. The protein is Phosphoglycerate kinase 2 (PGK2) of Macaca fascicularis (Crab-eating macaque).